A 254-amino-acid polypeptide reads, in one-letter code: 5-oxoprolinase subunit A (254 aa).

This sequence belongs to the LamB/PxpA family. Forms a complex composed of PxpA, PxpB and PxpC.

It catalyses the reaction 5-oxo-L-proline + ATP + 2 H2O = L-glutamate + ADP + phosphate + H(+). Functionally, catalyzes the cleavage of 5-oxoproline to form L-glutamate coupled to the hydrolysis of ATP to ADP and inorganic phosphate. The sequence is that of 5-oxoprolinase subunit A from Heliobacterium modesticaldum (strain ATCC 51547 / Ice1).